Reading from the N-terminus, the 234-residue chain is Sugar fermentation stimulation protein homolog (234 aa).

The protein belongs to the SfsA family.

The chain is Sugar fermentation stimulation protein homolog from Bartonella quintana (strain Toulouse) (Rochalimaea quintana).